The primary structure comprises 827 residues: MEASLAVIQRPQAGASNTVYKSGPLFISSKGLGWTSWKKRWFILTRTSLVFFKNDPSALPQKGGEVNLTLGGIDLNSSGSVVVREDKKLLTVLFPDGRDGRAFTLKAETLDDLYEWKAALEQALAQAPNAALVIGQNGIFRTEANNTIEASFNSWRDQRPLKSSVVGRPILLALEEIDGSPSFLEKALQFLETYGTKVEGILRQSADVEEVERRVQEYEQGKTEFSPEEDPHVVGDCVKHVLRQLPSSPVPASCCTALLEAYKIDQNEARVNSLRSAIIETFPEPNRRLLLRMLKMMHTITSHSSENRMTSSAVAACMSPLLLRPLLAGECDLEGFDTLGDNSAQLLAAANAANNAQAIVTALLEDYGNMINDEGLGRCSTSTDSHIGDSGPENSSDEEEIVVKHPDLHTLDIEEGETDDDNDVLLSRKPSESSDYAGSDLYDYKGFGVEDSDAESPRDIHCSVESTDFSARVKKHIEEPIKDIEVSSVSPTENCYQSGREAIPSVTPSTPLTALRYTTSAEKPASKTTGSSTVNSKRSSSWGRGNGKKTPAKGSFDSSGNDELLIQRLEHMKDELRQRIAKEAKGNAALQASLERRKQALHERRLALEQDVGRLQEQLQAERDLRSALEVGLSISCGQFSSQAADSKTRAELEEIALAEADVARLKQKVAELHHQLSQQRQHHLSSLPDAQSHHQFLHNHNTQLKSFQQDFDSILAFVNHERNQRTDETSLRADWRNGRGNNRQVPGSPSLNAASLGIPMEEYSPVMDYGRHHHPPATSAALMELTTRLDFFKERRSQLMEQIQNLDLNYGSSSSSLHRSSSPPWN.

Residues 18 to 125 (TVYKSGPLFI…WKAALEQALA (108 aa)) form the PH domain. The 200-residue stretch at 172 to 371 (LALEEIDGSP…ALLEDYGNMI (200 aa)) folds into the Rho-GAP domain. Disordered regions lie at residues 379 to 437 (CSTS…SDYA) and 517 to 561 (YTTS…SSGN). A compositionally biased stretch (basic and acidic residues) spans 401–412 (IVVKHPDLHTLD). Residues 413–423 (IEEGETDDDND) are compositionally biased toward acidic residues. Polar residues predominate over residues 517-543 (YTTSAEKPASKTTGSSTVNSKRSSSWG). Residues 560 to 684 (GNDELLIQRL…HQLSQQRQHH (125 aa)) are a coiled coil.

Its function is as follows. Acts as a GTPase activator for the Rac-type GTPase by converting it to an inactive GDP-bound state. The chain is Rho GTPase-activating protein 6 (ROPGAP6) from Arabidopsis thaliana (Mouse-ear cress).